The primary structure comprises 356 residues: UDP-N-acetylglucosamine--N-acetylmuramyl-(pentapeptide) pyrophosphoryl-undecaprenol N-acetylglucosamine transferase (356 aa).

Residues 12–14 (TAG), Arg-166, Ser-196, and Gln-291 contribute to the UDP-N-acetyl-alpha-D-glucosamine site.

The protein belongs to the glycosyltransferase 28 family. MurG subfamily.

It is found in the cell membrane. The enzyme catalyses di-trans,octa-cis-undecaprenyl diphospho-N-acetyl-alpha-D-muramoyl-L-alanyl-D-glutamyl-meso-2,6-diaminopimeloyl-D-alanyl-D-alanine + UDP-N-acetyl-alpha-D-glucosamine = di-trans,octa-cis-undecaprenyl diphospho-[N-acetyl-alpha-D-glucosaminyl-(1-&gt;4)]-N-acetyl-alpha-D-muramoyl-L-alanyl-D-glutamyl-meso-2,6-diaminopimeloyl-D-alanyl-D-alanine + UDP + H(+). It functions in the pathway cell wall biogenesis; peptidoglycan biosynthesis. Its function is as follows. Cell wall formation. Catalyzes the transfer of a GlcNAc subunit on undecaprenyl-pyrophosphoryl-MurNAc-pentapeptide (lipid intermediate I) to form undecaprenyl-pyrophosphoryl-MurNAc-(pentapeptide)GlcNAc (lipid intermediate II). This is UDP-N-acetylglucosamine--N-acetylmuramyl-(pentapeptide) pyrophosphoryl-undecaprenol N-acetylglucosamine transferase from Geobacillus thermodenitrificans (strain NG80-2).